A 280-amino-acid chain; its full sequence is Succinate dehydrogenase [ubiquinone] iron-sulfur subunit, mitochondrial (280 aa).

A mitochondrion-targeting transit peptide spans 1–28; sequence MAAVVAVSLKRWFPATTLGGACLQACRG. The 92-residue stretch at 40–131 folds into the 2Fe-2S ferredoxin-type domain; that stretch reads KKFAIYRWDP…DKVSKIYPLP (92 aa). 2 positions are modified to N6-acetyllysine: Lys-51 and Lys-55. [2Fe-2S] cluster contacts are provided by Cys-93, Cys-98, Cys-101, and Cys-113. The interaction with SDHAF1 stretch occupies residues 146–218; the sequence is FYAQYKSIEP…PAVLMQAYRW (73 aa). Residues 176–206 enclose the 4Fe-4S ferredoxin-type domain; sequence EREKLDGLYECILCACCSTSCPSYWWNGDKY. 3 residues coordinate [4Fe-4S] cluster: Cys-186, Cys-189, and Cys-192. Position 196 (Cys-196) interacts with [3Fe-4S] cluster. Position 201 (Trp-201) interacts with a ubiquinone. [3Fe-4S] cluster is bound by residues Cys-243 and Cys-249. Cys-253 provides a ligand contact to [4Fe-4S] cluster.

This sequence belongs to the succinate dehydrogenase/fumarate reductase iron-sulfur protein family. In terms of assembly, component of complex II composed of four subunits: the flavoprotein (FP) SDHA, iron-sulfur protein (IP) SDHB, and a cytochrome b560 composed of SDHC and SDHD. Interacts with SDHAF1; the interaction is required for iron-sulfur cluster incorporation into SDHB. It depends on [2Fe-2S] cluster as a cofactor. The cofactor is [3Fe-4S] cluster. [4Fe-4S] cluster is required as a cofactor.

The protein localises to the mitochondrion inner membrane. The enzyme catalyses a quinone + succinate = fumarate + a quinol. It carries out the reaction (R)-malate + a quinone = enol-oxaloacetate + a quinol. It catalyses the reaction (S)-malate + a quinone = enol-oxaloacetate + a quinol. Its pathway is carbohydrate metabolism; tricarboxylic acid cycle; fumarate from succinate (eukaryal route): step 1/1. With respect to regulation, enol-oxaloacetate inhibits the succinate dehydrogenase activity. In terms of biological role, iron-sulfur protein (IP) subunit of the succinate dehydrogenase complex (mitochondrial respiratory chain complex II), responsible for transferring electrons from succinate to ubiquinone (coenzyme Q). SDH also oxidizes malate to the non-canonical enol form of oxaloacetate, enol-oxaloacetate. Enol-oxaloacetate, which is a potent inhibitor of the succinate dehydrogenase activity, is further isomerized into keto-oxaloacetate. This Sus scrofa (Pig) protein is Succinate dehydrogenase [ubiquinone] iron-sulfur subunit, mitochondrial (SDHB).